Reading from the N-terminus, the 84-residue chain is U8-theraphotoxin-Hhn1c 3 (84 aa).

An N-terminal signal peptide occupies residues 1-21; sequence MKVALIVCLVWVMAMMELVSC. 5 disulfides stabilise this stretch: Cys23/Cys35, Cys29/Cys44, Cys34/Cys67, Cys54/Cys75, and Cys69/Cys81.

Belongs to the AVIT (prokineticin) family. Expressed by the venom gland.

The protein localises to the secreted. This is U8-theraphotoxin-Hhn1c 3 from Cyriopagopus hainanus (Chinese bird spider).